The following is a 721-amino-acid chain: Transcription activator of gluconeogenesis ARB_05058 (721 aa).

The span at 1-34 (MSPHQTTGQESDNMTVNGENAQASSQYIQSNEEM) shows a compositional bias: polar residues. The disordered stretch occupies residues 1–62 (MSPHQTTGQE…PSRPKRKKAK (62 aa)). Basic and acidic residues predominate over residues 40 to 55 (TEKKASTAKAAKDPSR). Residues 65–93 (CYACQRGHLTCGDERPCQRCIKRGFQDAC) constitute a DNA-binding region (zn(2)-C6 fungal-type). Disordered stretches follow at residues 128–224 (QNNA…FNSA), 263–300 (GDTP…SNQA), 353–400 (SPAS…TPQL), 533–567 (NHNV…YNSS), and 635–666 (GLNG…QRRW). Polar residues-rich tracts occupy residues 133–213 (GSNT…TPSA), 267–277 (PSESGAQRGSI), 287–300 (LTGS…SNQA), and 361–379 (MMTT…GAFN). Composition is skewed to low complexity over residues 380–399 (SRQN…STPQ) and 543–553 (GLMTGSTSRGS). The span at 640-661 (AASNETNELNGSLTNGATTNGR) shows a compositional bias: polar residues.

This sequence belongs to the ERT1/acuK family.

The protein resides in the nucleus. Transcription factor which regulates nonfermentable carbon utilization. Activator of gluconeogenetic genes. In Arthroderma benhamiae (strain ATCC MYA-4681 / CBS 112371) (Trichophyton mentagrophytes), this protein is Transcription activator of gluconeogenesis ARB_05058.